The chain runs to 315 residues: Glutathione synthetase (315 aa).

In terms of domain architecture, ATP-grasp spans 125–310 (KLFTAWFSEF…ITGMLFDAIE (186 aa)). 151–207 (HQAKGDIILKPLDGMGGTSIFRVKQDDPNLGVIIETLTQYGNQYAMAQAFIPEITKG) contributes to the ATP binding site. Positions 281 and 283 each coordinate Mg(2+).

The protein belongs to the prokaryotic GSH synthase family. Requires Mg(2+) as cofactor. The cofactor is Mn(2+).

The catalysed reaction is gamma-L-glutamyl-L-cysteine + glycine + ATP = glutathione + ADP + phosphate + H(+). It functions in the pathway sulfur metabolism; glutathione biosynthesis; glutathione from L-cysteine and L-glutamate: step 2/2. The protein is Glutathione synthetase of Shewanella oneidensis (strain ATCC 700550 / JCM 31522 / CIP 106686 / LMG 19005 / NCIMB 14063 / MR-1).